Reading from the N-terminus, the 339-residue chain is 3-isopropylmalate dehydrogenase (339 aa).

Positions 88, 98, 122, and 212 each coordinate substrate. Residues Asp212, Asp236, and Asp240 each coordinate Mg(2+). Residue Gly272–Asp284 coordinates NAD(+).

It belongs to the isocitrate and isopropylmalate dehydrogenases family. LeuB type 2 subfamily. As to quaternary structure, homodimer. Mg(2+) serves as cofactor. It depends on Mn(2+) as a cofactor.

The protein resides in the cytoplasm. The catalysed reaction is (2R,3S)-3-isopropylmalate + NAD(+) = 4-methyl-2-oxopentanoate + CO2 + NADH. It participates in amino-acid biosynthesis; L-leucine biosynthesis; L-leucine from 3-methyl-2-oxobutanoate: step 3/4. Its function is as follows. Catalyzes the oxidation of 3-carboxy-2-hydroxy-4-methylpentanoate (3-isopropylmalate) to 3-carboxy-4-methyl-2-oxopentanoate. The product decarboxylates to 4-methyl-2 oxopentanoate. The sequence is that of 3-isopropylmalate dehydrogenase from Corynebacterium urealyticum (strain ATCC 43042 / DSM 7109).